The primary structure comprises 586 residues: uncharacterized protein (586 aa).

Positions Y29 to S312 constitute an ABC transmembrane type-1 domain. The next 4 helical transmembrane spans lie at G30–M50, V66–V86, M162–V184, and I256–V276. In terms of domain architecture, ABC transporter spans I346 to L580. G379–S386 serves as a coordination point for ATP.

The protein belongs to the ABC transporter superfamily.

The protein localises to the cell membrane. This is an uncharacterized protein from Sinorhizobium fredii (strain NBRC 101917 / NGR234).